The sequence spans 205 residues: Urease accessory protein UreG (205 aa).

A GTP-binding site is contributed by 14 to 21 (GPVGSGKT).

This sequence belongs to the SIMIBI class G3E GTPase family. UreG subfamily. In terms of assembly, homodimer. UreD, UreF and UreG form a complex that acts as a GTP-hydrolysis-dependent molecular chaperone, activating the urease apoprotein by helping to assemble the nickel containing metallocenter of UreC. The UreE protein probably delivers the nickel.

It is found in the cytoplasm. Functionally, facilitates the functional incorporation of the urease nickel metallocenter. This process requires GTP hydrolysis, probably effectuated by UreG. This is Urease accessory protein UreG from Escherichia coli O157:H7.